We begin with the raw amino-acid sequence, 540 residues long: MAAKDVKFGNDARVKMLRGVNVLADAVKVTLGPKGRNVVLDKSFGAPTITKDGVSVAREIELEDKFENMGAQMVKEVASKANDAAGDGTTTATVLAQAIITEGLKAVAAGMNPMDLKRGIDKAVIAAVEELKALSVPCSDSKAIAQVGTISANSDETVGKMIAEAMDKVGKEGVITVEEGTGLQDELDVVEGMQFDRGYLSPYFINKPETGAVELESPFILLADKKISNIREMLPVLEAVAKAGKPLVIVAEDVEGEALATLVVNTMRGIVKVAAVKAPGFGDRRKAMLQDIATLTGGTVISEEIGLELEKATLEDLGQAKRVVINKDTTTIIDGTGEEAAIQGRVAQIRQQVEEATSDYDKEKLQERVAKLAGGVAVIKVGAATEVEMKEKKARVEDALAATRAAVEEGVVAGGGVALVRVAAKLASLTAQNEDQNVGIKVALRAMEAPLRQIVSNAGEEPSVVANNVKAGDGNYGYNAATEEYGNMIDFGILDPTKVTRSALQFAASVAGLMITTECMVTDLPKGDAPDLGGAGGMGG.

Residues 30-33 (TLGP), Lys51, 87-91 (DGTTT), Gly415, 479-481 (NAA), and Asp495 contribute to the ATP site.

The protein belongs to the chaperonin (HSP60) family. Forms a cylinder of 14 subunits composed of two heptameric rings stacked back-to-back. Interacts with the co-chaperonin GroES.

Its subcellular location is the cytoplasm. The enzyme catalyses ATP + H2O + a folded polypeptide = ADP + phosphate + an unfolded polypeptide.. Its function is as follows. Together with its co-chaperonin GroES, plays an essential role in assisting protein folding. The GroEL-GroES system forms a nano-cage that allows encapsulation of the non-native substrate proteins and provides a physical environment optimized to promote and accelerate protein folding. This chain is Chaperonin GroEL, found in Pectobacterium carotovorum subsp. carotovorum (Erwinia carotovora subsp. carotovora).